We begin with the raw amino-acid sequence, 132 residues long: Small ribosomal subunit protein uS8c (132 aa).

The protein belongs to the universal ribosomal protein uS8 family. As to quaternary structure, part of the 30S ribosomal subunit.

The protein localises to the plastid. The protein resides in the chloroplast. In terms of biological role, one of the primary rRNA binding proteins, it binds directly to 16S rRNA central domain where it helps coordinate assembly of the platform of the 30S subunit. This chain is Small ribosomal subunit protein uS8c (rps8), found in Anthoceros angustus (Hornwort).